The primary structure comprises 232 residues: Mediator of RNA polymerase II transcription subunit 18 (232 aa).

It belongs to the Mediator complex subunit 18 family. In terms of assembly, component of the Mediator complex.

It is found in the nucleus. In terms of biological role, component of the Mediator complex, a coactivator involved in the regulated transcription of nearly all RNA polymerase II-dependent genes. Mediator functions as a bridge to convey information from gene-specific regulatory proteins to the basal RNA polymerase II transcription machinery. Mediator is recruited to promoters by direct interactions with regulatory proteins and serves as a scaffold for the assembly of a functional preinitiation complex with RNA polymerase II and the general transcription factors. This Caenorhabditis elegans protein is Mediator of RNA polymerase II transcription subunit 18 (mdt-18).